A 257-amino-acid polypeptide reads, in one-letter code: Tryptophan synthase alpha chain (257 aa).

Active-site proton acceptor residues include Glu-47 and Asp-58.

The protein belongs to the TrpA family. Tetramer of two alpha and two beta chains.

It carries out the reaction (1S,2R)-1-C-(indol-3-yl)glycerol 3-phosphate + L-serine = D-glyceraldehyde 3-phosphate + L-tryptophan + H2O. It functions in the pathway amino-acid biosynthesis; L-tryptophan biosynthesis; L-tryptophan from chorismate: step 5/5. Its function is as follows. The alpha subunit is responsible for the aldol cleavage of indoleglycerol phosphate to indole and glyceraldehyde 3-phosphate. This is Tryptophan synthase alpha chain from Listeria welshimeri serovar 6b (strain ATCC 35897 / DSM 20650 / CCUG 15529 / CIP 8149 / NCTC 11857 / SLCC 5334 / V8).